The chain runs to 252 residues: Cell division protein ZapD (252 aa).

It belongs to the ZapD family. In terms of assembly, interacts with FtsZ.

Its subcellular location is the cytoplasm. Cell division factor that enhances FtsZ-ring assembly. Directly interacts with FtsZ and promotes bundling of FtsZ protofilaments, with a reduction in FtsZ GTPase activity. This Ralstonia pickettii (strain 12J) protein is Cell division protein ZapD.